A 166-amino-acid chain; its full sequence is Small ribosomal subunit protein bS6 (166 aa).

Positions 97-166 (EEGPSAMMRK…EEAETATDGE (70 aa)) are disordered. Residues 105 to 159 (RKADRDRERDDRGGGFRGEREGGFRGDREGGFRGGDRDGGGFRGDRGPRRPREEA) show a composition bias toward basic and acidic residues.

The protein belongs to the bacterial ribosomal protein bS6 family.

Binds together with bS18 to 16S ribosomal RNA. This is Small ribosomal subunit protein bS6 from Bradyrhizobium diazoefficiens (strain JCM 10833 / BCRC 13528 / IAM 13628 / NBRC 14792 / USDA 110).